We begin with the raw amino-acid sequence, 305 residues long: Acetylglutamate kinase (305 aa).

Substrate contacts are provided by residues 75 to 76 (GG), R97, and N202.

Belongs to the acetylglutamate kinase family. ArgB subfamily.

The protein resides in the cytoplasm. The catalysed reaction is N-acetyl-L-glutamate + ATP = N-acetyl-L-glutamyl 5-phosphate + ADP. Its pathway is amino-acid biosynthesis; L-arginine biosynthesis; N(2)-acetyl-L-ornithine from L-glutamate: step 2/4. Catalyzes the ATP-dependent phosphorylation of N-acetyl-L-glutamate. The polypeptide is Acetylglutamate kinase (Rhodospirillum centenum (strain ATCC 51521 / SW)).